The primary structure comprises 154 residues: NADPH-dependent 7-cyano-7-deazaguanine reductase (154 aa).

Residues 1–13 (MSKTDVSGLSQLG) are compositionally biased toward polar residues. The disordered stretch occupies residues 1 to 24 (MSKTDVSGLSQLGRQVDAPTSPET). The Thioimide intermediate role is filled by cysteine 52. Residue aspartate 59 is the Proton donor of the active site. Residues 74–76 (VES) and 93–94 (HE) each bind substrate.

Belongs to the GTP cyclohydrolase I family. QueF type 1 subfamily.

The protein localises to the cytoplasm. The enzyme catalyses 7-aminomethyl-7-carbaguanine + 2 NADP(+) = 7-cyano-7-deazaguanine + 2 NADPH + 3 H(+). Its pathway is tRNA modification; tRNA-queuosine biosynthesis. Catalyzes the NADPH-dependent reduction of 7-cyano-7-deazaguanine (preQ0) to 7-aminomethyl-7-deazaguanine (preQ1). The sequence is that of NADPH-dependent 7-cyano-7-deazaguanine reductase from Allorhizobium ampelinum (strain ATCC BAA-846 / DSM 112012 / S4) (Agrobacterium vitis (strain S4)).